The following is a 446-amino-acid chain: Tubulin beta-5 chain (446 aa).

An MREI motif motif is present at residues 1–4 (MREI). The GTP site is built by Q11, E69, S138, G142, T143, G144, N204, and N226. E69 contacts Mg(2+). At E438 the chain carries 5-glutamyl polyglutamate.

Belongs to the tubulin family. Dimer of alpha and beta chains. A typical microtubule is a hollow water-filled tube with an outer diameter of 25 nm and an inner diameter of 15 nM. Alpha-beta heterodimers associate head-to-tail to form protofilaments running lengthwise along the microtubule wall with the beta-tubulin subunit facing the microtubule plus end conferring a structural polarity. Microtubules usually have 13 protofilaments but different protofilament numbers can be found in some organisms and specialized cells. Mg(2+) is required as a cofactor. Post-translationally, some glutamate residues at the C-terminus are polyglycylated, resulting in polyglycine chains on the gamma-carboxyl group. Glycylation is mainly limited to tubulin incorporated into axonemes (cilia and flagella) whereas glutamylation is prevalent in neuronal cells, centrioles, axonemes, and the mitotic spindle. Both modifications can coexist on the same protein on adjacent residues, and lowering polyglycylation levels increases polyglutamylation, and reciprocally. The precise function of polyglycylation is still unclear. Some glutamate residues at the C-terminus are polyglutamylated, resulting in polyglutamate chains on the gamma-carboxyl group. Polyglutamylation plays a key role in microtubule severing by spastin (SPAST). SPAST preferentially recognizes and acts on microtubules decorated with short polyglutamate tails: severing activity by SPAST increases as the number of glutamates per tubulin rises from one to eight, but decreases beyond this glutamylation threshold.

It is found in the cytoplasm. It localises to the cytoskeleton. Its function is as follows. Tubulin is the major constituent of microtubules, a cylinder consisting of laterally associated linear protofilaments composed of alpha- and beta-tubulin heterodimers. Microtubules grow by the addition of GTP-tubulin dimers to the microtubule end, where a stabilizing cap forms. Below the cap, tubulin dimers are in GDP-bound state, owing to GTPase activity of alpha-tubulin. The chain is Tubulin beta-5 chain from Gallus gallus (Chicken).